We begin with the raw amino-acid sequence, 72 residues long: Protein kish-A (72 aa).

Positions Met1 to Ser26 are cleaved as a signal peptide. Topologically, residues Leu27–Lys53 are extracellular. An N-linked (GlcNAc...) asparagine glycan is attached at Asn35. A helical membrane pass occupies residues Ser54–Ser71. Glu72 is a topological domain (cytoplasmic).

It belongs to the KISH family.

It localises to the golgi apparatus membrane. In terms of biological role, involved in the early part of the secretory pathway. This is Protein kish-A (tmem167a) from Danio rerio (Zebrafish).